Consider the following 204-residue polypeptide: Leucyl/phenylalanyl-tRNA--protein transferase (204 aa).

It belongs to the L/F-transferase family.

Its subcellular location is the cytoplasm. The enzyme catalyses N-terminal L-lysyl-[protein] + L-leucyl-tRNA(Leu) = N-terminal L-leucyl-L-lysyl-[protein] + tRNA(Leu) + H(+). It catalyses the reaction N-terminal L-arginyl-[protein] + L-leucyl-tRNA(Leu) = N-terminal L-leucyl-L-arginyl-[protein] + tRNA(Leu) + H(+). The catalysed reaction is L-phenylalanyl-tRNA(Phe) + an N-terminal L-alpha-aminoacyl-[protein] = an N-terminal L-phenylalanyl-L-alpha-aminoacyl-[protein] + tRNA(Phe). Functionally, functions in the N-end rule pathway of protein degradation where it conjugates Leu, Phe and, less efficiently, Met from aminoacyl-tRNAs to the N-termini of proteins containing an N-terminal arginine or lysine. This chain is Leucyl/phenylalanyl-tRNA--protein transferase, found in Rhizobium etli (strain ATCC 51251 / DSM 11541 / JCM 21823 / NBRC 15573 / CFN 42).